The primary structure comprises 244 residues: NAD reductase coq12 (244 aa).

The disordered stretch occupies residues 131–158 (NPLMNSEKNSTSVEDLPGSNRTQQTSSH). Residues 132–158 (PLMNSEKNSTSVEDLPGSNRTQQTSSH) show a composition bias toward polar residues.

It is found in the mitochondrion. The catalysed reaction is a reduced flavin + NAD(+) = an oxidized flavin + NADH + 2 H(+). Its function is as follows. NADH-dependent flavin reductase that acts in the coenzyme Q biosynthetic pathway. Required for synthesis of the p-hydroxybenzoic acid (PHB) precursor to form a quinone backbone. In Schizosaccharomyces pombe (strain 972 / ATCC 24843) (Fission yeast), this protein is NAD reductase coq12.